We begin with the raw amino-acid sequence, 212 residues long: MNSFSTSAFGPVAFSLGLLLVLPAAFPAPVPPGEDSKDVAAPHRQPLTSSERIDKQIRYILDGISALRKETCNKSNMCESSKEALAENNLNLPKMAEKDGCFQSGFNEETCLVKIITGLLEFEVYLEYLQNRFESSEEQARAVQMSTKVLIQFLQKKAKNLDAITTPDPTTNASLLTKLQAQNQWLQDMTTHLILRSFKEFLQSSLRALRQM.

Positions 1–29 are cleaved as a signal peptide; it reads MNSFSTSAFGPVAFSLGLLLVLPAAFPAP. The cysteines at positions 72 and 78 are disulfide-linked. Asn-73 is a glycosylation site (N-linked (GlcNAc...) asparagine). At Ser-81 the chain carries Phosphoserine; by FAM20C. A disulfide bridge links Cys-101 with Cys-111.

Belongs to the IL-6 superfamily. Component of a hexamer of two molecules each of IL6, IL6R and IL6ST; first binds to IL6R to associate with the signaling subunit IL6ST. Interacts with IL6R (via the N-terminal ectodomain); this interaction may be affected by IL6R-binding with SORL1, hence decreasing IL6 cis signaling. Interacts with SORL1 (via the N-terminal ectodomain); this interaction leads to IL6 internalization and lysosomal degradation. May form a trimeric complex with the soluble SORL1 ectodomain and soluble IL6R receptor; this interaction might stabilize circulating IL6, hence promoting IL6 trans signaling. N- and O-glycosylated. As to expression, produced by skeletal muscle.

The protein resides in the secreted. Functionally, cytokine with a wide variety of biological functions in immunity, tissue regeneration, and metabolism. Binds to IL6R, then the complex associates to the signaling subunit IL6ST/gp130 to trigger the intracellular IL6-signaling pathway. The interaction with the membrane-bound IL6R and IL6ST stimulates 'classic signaling', whereas the binding of IL6 and soluble IL6R to IL6ST stimulates 'trans-signaling'. Alternatively, 'cluster signaling' occurs when membrane-bound IL6:IL6R complexes on transmitter cells activate IL6ST receptors on neighboring receiver cells. Its function is as follows. IL6 is a potent inducer of the acute phase response. Rapid production of IL6 contributes to host defense during infection and tissue injury, but excessive IL6 synthesis is involved in disease pathology. In the innate immune response, is synthesized by myeloid cells, such as macrophages and dendritic cells, upon recognition of pathogens through toll-like receptors (TLRs) at the site of infection or tissue injury. In the adaptive immune response, is required for the differentiation of B cells into immunoglobulin-secreting cells. Plays a major role in the differentiation of CD4(+) T cell subsets. Essential factor for the development of T follicular helper (Tfh) cells that are required for the induction of germinal-center formation. Required to drive naive CD4(+) T cells to the Th17 lineage. Also required for proliferation of myeloma cells and the survival of plasmablast cells. In terms of biological role, acts as an essential factor in bone homeostasis and on vessels directly or indirectly by induction of VEGF, resulting in increased angiogenesis activity and vascular permeability. Induces, through 'trans-signaling' and synergistically with IL1B and TNF, the production of VEGF. Involved in metabolic controls, is discharged into the bloodstream after muscle contraction increasing lipolysis and improving insulin resistance. 'Trans-signaling' in central nervous system also regulates energy and glucose homeostasis. Mediates, through GLP-1, crosstalk between insulin-sensitive tissues, intestinal L cells and pancreatic islets to adapt to changes in insulin demand. Also acts as a myokine. Plays a protective role during liver injury, being required for maintenance of tissue regeneration. Also has a pivotal role in iron metabolism by regulating HAMP/hepcidin expression upon inflammation or bacterial infection. Through activation of IL6ST-YAP-NOTCH pathway, induces inflammation-induced epithelial regeneration. The protein is Interleukin-6 of Homo sapiens (Human).